The chain runs to 151 residues: UPF0208 membrane protein ESA_00924 (151 aa).

The next 2 membrane-spanning stretches (helical) occupy residues 46–65 (FAIRIMPPVAVFTLCWQIAL) and 69–91 (LGPAVATALFALSMPMQGLWWLG).

It belongs to the UPF0208 family.

The protein resides in the cell inner membrane. This chain is UPF0208 membrane protein ESA_00924, found in Cronobacter sakazakii (strain ATCC BAA-894) (Enterobacter sakazakii).